A 214-amino-acid polypeptide reads, in one-letter code: Protein verrocchio (214 aa).

As to quaternary structure, probably homomultimerizes. Component of the MTV complex, composed of moi/modigliani, tea and ver/verrocchio. Interacts with moi/modigliani and tea (via C-terminus); the interactions are direct and require fully intact moi/modigliani and ver/verrocchio. The MTV complex is recruited to telomeres by the HipHop-HOAP complex, consisting of HipHop, cav/HOAP and Su(var)205/HP1 to form the terminin telomere-capping complex. Interacts with cav/HOAP; the interaction is direct. Interacts with Su(var)205/HP1; the interaction is indirect and probably requires cav/HOAP or moi/modigliani. Probably interacts with peo (via N-terminus and UBC domain).

The protein resides in the nucleus. It localises to the chromosome. It is found in the telomere. Functionally, part of the MTV complex that associates with the HipHop-HOAP complex to form the terminin telomere-capping complex involved in telomere maintenance and prevention of telomere fusion. As part of the MTV complex binds single stranded DNA in a sequence-independent manner, protecting it from degradation. The chain is Protein verrocchio from Drosophila melanogaster (Fruit fly).